Reading from the N-terminus, the 341-residue chain is Peroxisomal membrane protein PEX14 (341 aa).

The residue at position 2 (S2) is an N-acetylserine. The SH3-binding signature appears at 86-94; it reads PPTLPHRDW. The segment at 276–341 is disordered; the sequence is MQEESDKEKE…QNGQVEDSIP (66 aa). Residues 279–295 show a composition bias toward basic and acidic residues; sequence ESDKEKENGSDANKDDN. Positions 308–341 are enriched in polar residues; the sequence is IDSNASIPEWQKNTAANEISVPDWQNGQVEDSIP. Phosphoserine is present on S313.

It belongs to the peroxin-14 family. Interacts with PEX13 (via SH3 domain); forming the PEX13-PEX14 docking complex. Interacts with PEX5 (via WxxxF/Y motifs). Interacts with PEX7. Interacts with PEX9.

It is found in the peroxisome membrane. In terms of biological role, component of the PEX13-PEX14 docking complex, a translocon channel that specifically mediates the import of peroxisomal cargo proteins bound to PEX5 or PEX21 receptors. The PEX13-PEX14 docking complex forms a large import pore which can be opened to a diameter of about 9 nm. Mechanistically, PEX5 (or PEX21) receptor along with cargo proteins associates with the PEX14 subunit of the PEX13-PEX14 docking complex in the cytosol, leading to the insertion of the receptor into the organelle membrane with the concomitant translocation of the cargo into the peroxisome matrix. The protein is Peroxisomal membrane protein PEX14 of Saccharomyces cerevisiae (strain ATCC 204508 / S288c) (Baker's yeast).